The following is a 656-amino-acid chain: Histidine decarboxylase (656 aa).

Residues Y84 and H197 each coordinate substrate. K308 is modified (N6-(pyridoxal phosphate)lysine). 2 positions are modified to phosphoserine; by PKA: S343 and S362. The interval H481 to S502 is disordered.

The protein belongs to the group II decarboxylase family. As to quaternary structure, homodimer. The cofactor is pyridoxal 5'-phosphate. Post-translationally, may be post-translationally processed. In terms of tissue distribution, brain, glandular regions of the stomach, mast cells and fetal liver.

The catalysed reaction is L-histidine + H(+) = histamine + CO2. It functions in the pathway amine and polyamine biosynthesis; histamine biosynthesis; histamine from L-histidine: step 1/1. With respect to regulation, phosphorylation of brain HDC by cAMP-dependent protein kinase leads to enzyme inactivation. Functionally, catalyzes the biosynthesis of histamine from histidine. This is Histidine decarboxylase (Hdc) from Rattus norvegicus (Rat).